A 453-amino-acid chain; its full sequence is Succinate-semialdehyde dehydrogenase (acetylating) (453 aa).

188 to 193 contacts NADP(+); the sequence is ATGGAG. Cysteine 242 is an active-site residue.

As to quaternary structure, homodimer.

The enzyme catalyses succinate semialdehyde + NADP(+) + CoA = succinyl-CoA + NADPH + H(+). Functionally, catalyzes the reduction of succinate semialdehyde to succinyl-CoA. The enzyme is specific for succinate semialdehyde and succinyl-CoA, and only shows low activity with palmitoyl-CoA. There is no activity with NAD(+) as cosubstrate. This chain is Succinate-semialdehyde dehydrogenase (acetylating) (sucD), found in Clostridium kluyveri (strain ATCC 8527 / DSM 555 / NBRC 12016 / NCIMB 10680 / K1).